We begin with the raw amino-acid sequence, 248 residues long: MKKIVLLRHGESTWNKENRFTGWTDVDLTEKGVAEAAKAGEILKKEGFIFDKAYTSYLKRAVKTLNCVLDKMDLDWINVEKTWRLNEKHYGTLQGLNKAETAEKYGAEQVQLWRRSFDIAPDPIPEDDPRNPRKDIRYKNVTNADLPATESLKDTIARTMPYWTDVIMKQLKTSNQLIVVAHGNSLRGVIKHLKNISDEDIVNLNLPTAVPYVFEFDDNLNMTRDYFLGDPEEVKKLMEAVANQAKKK.

Substrate-binding positions include 8–15 (RHGESTWN), 21–22 (TG), Arg-60, 87–90 (EKHY), Lys-98, 114–115 (RR), and 183–184 (GN). His-9 acts as the Tele-phosphohistidine intermediate in catalysis. Glu-87 (proton donor/acceptor) is an active-site residue.

It belongs to the phosphoglycerate mutase family. BPG-dependent PGAM subfamily.

It catalyses the reaction (2R)-2-phosphoglycerate = (2R)-3-phosphoglycerate. It participates in carbohydrate degradation; glycolysis; pyruvate from D-glyceraldehyde 3-phosphate: step 3/5. Functionally, catalyzes the interconversion of 2-phosphoglycerate and 3-phosphoglycerate. This is 2,3-bisphosphoglycerate-dependent phosphoglycerate mutase from Elusimicrobium minutum (strain Pei191).